Here is a 325-residue protein sequence, read N- to C-terminus: Odorant receptor 131-2 (325 aa).

The Extracellular portion of the chain corresponds to 1 to 22 (MNSTSNSSLGNTFISKTLKEKS). 2 N-linked (GlcNAc...) asparagine glycosylation sites follow: Asn2 and Asn6. A helical transmembrane segment spans residues 23-43 (LTVQVLVGILLYVNGLMIFTF). Over 44-54 (LKKETFRDTRY) the chain is Cytoplasmic. Residues 55–75 (ILFAQTLFVDSALMLFADLTL) traverse the membrane as a helical segment. The Extracellular segment spans residues 76 to 91 (VGSAYELFIHIISCYI). Cys89 and Cys170 form a disulfide bridge. The helical transmembrane segment at 92–112 (FCTVMALLSICSPVTLVAMCL) threads the bilayer. At 113 to 135 (ERYVAICLPLRHASISSPKNTIN) the chain is on the cytoplasmic side. A helical transmembrane segment spans residues 136–156 (GLLIIWGVSSVIPLFIFIVSF). Topologically, residues 157 to 190 (TYTPPNAMNSYVVCSNDVMFQVKWLAEMRALSQQ) are extracellular. A helical membrane pass occupies residues 191–211 (LLFVIMLCIVGSTYIKIMVAA). The Cytoplasmic portion of the chain corresponds to 212-227 (KSASAENKKSTYKGLR). A helical transmembrane segment spans residues 228–248 (TVILHGLQLILGMMQLITPYI). At 249-267 (DILTLKVDIMLFINVKFSN) the chain is on the extracellular side. A helical transmembrane segment spans residues 268 to 285 (FMLFWIFPRCLSPLVYGL). The Cytoplasmic portion of the chain corresponds to 286–325 (RDKKFYNALKYYAFCGIYVCKKHKIKDSKTIRGAVSIAIY).

The protein belongs to the G-protein coupled receptor 1 family. In terms of assembly, homodimer. Monomer.

The protein localises to the cell membrane. The protein resides in the cytoplasm. Probable olfactory receptor. The chain is Odorant receptor 131-2 from Danio rerio (Zebrafish).